The chain runs to 396 residues: ATP phosphoribosyltransferase regulatory subunit (396 aa).

It belongs to the class-II aminoacyl-tRNA synthetase family. HisZ subfamily. In terms of assembly, heteromultimer composed of HisG and HisZ subunits.

It is found in the cytoplasm. The protein operates within amino-acid biosynthesis; L-histidine biosynthesis; L-histidine from 5-phospho-alpha-D-ribose 1-diphosphate: step 1/9. Its function is as follows. Required for the first step of histidine biosynthesis. May allow the feedback regulation of ATP phosphoribosyltransferase activity by histidine. In Alkaliphilus metalliredigens (strain QYMF), this protein is ATP phosphoribosyltransferase regulatory subunit.